Reading from the N-terminus, the 889-residue chain is Coatomer subunit beta' (889 aa).

WD repeat units lie at residues 11–41 (NRSD…ELWN), 53–83 (VTET…RVFN), 95–125 (AHPD…KLWN), 138–169 (GHEH…KVWS), 182–214 (GQER…KIWD), and 226–256 (GHMS…KIWN). Residue Ser326 is modified to Phosphoserine. Residues 806-889 (CGAEGLPGSS…AVPEPVEEES (84 aa)) are disordered. Residues 836 to 864 (DENKEAEVEDSEFKESNSEAVEAEKKEEE) show a composition bias toward basic and acidic residues. The segment covering 866–879 (PQQQQSEQQPEQGE) has biased composition (low complexity).

The protein belongs to the WD repeat COPB2 family. Oligomeric complex that consists of at least the alpha, beta, beta', gamma, delta, epsilon and zeta subunits. Interacts with the ESCRT-0 subunit VPS27.

It localises to the cytoplasm. It is found in the golgi apparatus membrane. The protein resides in the cytoplasmic vesicle. Its subcellular location is the COPI-coated vesicle membrane. Functionally, the coatomer is a cytosolic protein complex that binds to dilysine motifs and reversibly associates with Golgi non-clathrin-coated vesicles, which further mediate biosynthetic protein transport from the ER, via the Golgi up to the trans Golgi network. Coatomer complex is required for budding from Golgi membranes, and is essential for the retrograde Golgi-to-ER transport of dilysine-tagged proteins. The sequence is that of Coatomer subunit beta' (SEC27) from Saccharomyces cerevisiae (strain ATCC 204508 / S288c) (Baker's yeast).